The sequence spans 137 residues: Basic phospholipase A2 beta-bungarotoxin A5 chain (137 aa).

Residues 1–9 form the signal peptide; it reads AVCVSLLGA. Residues 10-17 constitute a propeptide that is removed on maturation; it reads ANIPPQHL. 6 cysteine pairs are disulfide-bonded: Cys44-Cys136, Cys46-Cys62, Cys61-Cys117, Cys68-Cys110, Cys78-Cys103, and Cys96-Cys108. Positions 45, 47, and 49 each coordinate Ca(2+). Residue His65 is part of the active site. Position 66 (Asp66) interacts with Ca(2+). The active site involves Asp111.

This sequence belongs to the phospholipase A2 family. Group I subfamily. D49 sub-subfamily. Heterodimer; disulfide-linked. The A chains have phospholipase A2 activity and the B chains show homology with the basic protease inhibitors. Ca(2+) serves as cofactor. As to expression, expressed by the venom gland.

Its subcellular location is the secreted. It catalyses the reaction a 1,2-diacyl-sn-glycero-3-phosphocholine + H2O = a 1-acyl-sn-glycero-3-phosphocholine + a fatty acid + H(+). In terms of biological role, snake venom phospholipase A2 (PLA2) that inhibits neuromuscular transmission by blocking acetylcholine release from the nerve termini. PLA2 catalyzes the calcium-dependent hydrolysis of the 2-acyl groups in 3-sn-phosphoglycerides. The protein is Basic phospholipase A2 beta-bungarotoxin A5 chain of Bungarus multicinctus (Many-banded krait).